Consider the following 337-residue polypeptide: G-protein coupled receptor 26 (337 aa).

At 1-10 the chain is on the extracellular side; it reads MNSWDAGLAG. A helical membrane pass occupies residues 11–31; the sequence is LLVGTIGVSLLSNGLVLLCLL. Topologically, residues 32–47 are cytoplasmic; the sequence is HSADIRRQAPALFTLN. The chain crosses the membrane as a helical span at residues 48–68; the sequence is LTCGNLLCTVVNMPLTLAGVV. Over 69–81 the chain is Extracellular; the sequence is AQRQPAGDRLCRL. Residues Cys79 and Cys156 are joined by a disulfide bond. Residues 82–102 traverse the membrane as a helical segment; that stretch reads AAFLDTFLAANSMLSMAALSI. Topologically, residues 103 to 123 are cytoplasmic; it reads DRWVAVVFPLSYRAKMRLRDA. Residues 124–144 form a helical membrane-spanning segment; that stretch reads AFMVAYTWLHALTFPATALAL. Topologically, residues 145–168 are extracellular; that stretch reads SWLGFHQLYASCTLCSRRPDERLR. The helical transmembrane segment at 169–189 threads the bilayer; the sequence is FAVFTSAFHALSFLLSFIVLC. At 190–245 the chain is on the cytoplasmic side; that stretch reads FTYLKVLKVARFHCKRIDVITMQTLVLLVDIHPSVRERCLEEQKRRRQRATKKIST. A helical membrane pass occupies residues 246–266; it reads FIGTFLVCFAPYVITRLVELF. Over 267–276 the chain is Extracellular; sequence STAPIDSHWG. The helical transmembrane segment at 277 to 297 threads the bilayer; the sequence is VLSKCLAYSKAASDPFVYSLL. Residues 298–337 lie on the Cytoplasmic side of the membrane; sequence RHQYRRSCKELLNRIFNRRSIHSVGLTGDSHSQNILPVSE.

Belongs to the G-protein coupled receptor 1 family. Detected in extracts of several brain regions including striatum, pons, cerebellum and cortex. Not detected in numerous peripheral tissue extracts, except in testis. In the brain, detected in cortical structures including the anterior cingulate area, posterior cingulate and the frontoparietal, somatosensory and piriform cortices. Prominent also in the olfactory tubercle, the islands of Calleja, ventromedial and posterior nuclei of the hypothalamus, the medial septal nucleus, nucleus of the diagonal band and the ventral tegmental area. Localized also to hippocampal structures, with signals strongest over the CA2 and CA3 regions of Ammon's horn and less so over the dentate gyrus. Expressed in the caudate putamen only in its most caudal portion, with a decreasing gradient of signal from the dorsal to ventral aspect. Strong expression associated with a single pontine structure, the inferior olivary nucleus.

It localises to the cell membrane. Functionally, orphan receptor. Displays a significant level of constitutive activity. Its effect is mediated by G(s)-alpha protein that stimulate adenylate cyclase, resulting in an elevation of intracellular cAMP. The sequence is that of G-protein coupled receptor 26 (Gpr26) from Rattus norvegicus (Rat).